We begin with the raw amino-acid sequence, 360 residues long: S-adenosylmethionine:tRNA ribosyltransferase-isomerase (360 aa).

This sequence belongs to the QueA family. Monomer.

It is found in the cytoplasm. The catalysed reaction is 7-aminomethyl-7-carbaguanosine(34) in tRNA + S-adenosyl-L-methionine = epoxyqueuosine(34) in tRNA + adenine + L-methionine + 2 H(+). The protein operates within tRNA modification; tRNA-queuosine biosynthesis. Transfers and isomerizes the ribose moiety from AdoMet to the 7-aminomethyl group of 7-deazaguanine (preQ1-tRNA) to give epoxyqueuosine (oQ-tRNA). This Sinorhizobium medicae (strain WSM419) (Ensifer medicae) protein is S-adenosylmethionine:tRNA ribosyltransferase-isomerase.